The following is a 126-amino-acid chain: Small ribosomal subunit protein bS16 (126 aa).

The interval 87–126 (ARSNPEKALPGKRALERVAEKKQKAEDAAAAAAAEASAAE) is disordered. Positions 99 to 113 (RALERVAEKKQKAED) are enriched in basic and acidic residues. A compositionally biased stretch (low complexity) spans 114–126 (AAAAAAAEASAAE).

The protein belongs to the bacterial ribosomal protein bS16 family.

In Agrobacterium fabrum (strain C58 / ATCC 33970) (Agrobacterium tumefaciens (strain C58)), this protein is Small ribosomal subunit protein bS16.